Consider the following 328-residue polypeptide: Phosphate acyltransferase (328 aa).

It belongs to the PlsX family. In terms of assembly, homodimer. Probably interacts with PlsY.

The protein localises to the cytoplasm. It catalyses the reaction a fatty acyl-[ACP] + phosphate = an acyl phosphate + holo-[ACP]. It participates in lipid metabolism; phospholipid metabolism. In terms of biological role, catalyzes the reversible formation of acyl-phosphate (acyl-PO(4)) from acyl-[acyl-carrier-protein] (acyl-ACP). This enzyme utilizes acyl-ACP as fatty acyl donor, but not acyl-CoA. The sequence is that of Phosphate acyltransferase from Campylobacter jejuni subsp. jejuni serotype O:2 (strain ATCC 700819 / NCTC 11168).